We begin with the raw amino-acid sequence, 789 residues long: Phenylalanine--tRNA ligase beta subunit (789 aa).

The tRNA-binding domain occupies 38–151 (KKHLQSFVVV…NTYNVGESFF (114 aa)). In terms of domain architecture, B5 spans 398-474 (HNDILLNFSP…RLYGYDKILE (77 aa)). Mg(2+) contacts are provided by aspartate 452, aspartate 458, glutamate 461, and glutamate 462. The FDX-ACB domain occupies 694–787 (LRYQSVKRDF…ISKGFNGILR (94 aa)).

It belongs to the phenylalanyl-tRNA synthetase beta subunit family. Type 1 subfamily. In terms of assembly, tetramer of two alpha and two beta subunits. Requires Mg(2+) as cofactor.

The protein localises to the cytoplasm. It carries out the reaction tRNA(Phe) + L-phenylalanine + ATP = L-phenylalanyl-tRNA(Phe) + AMP + diphosphate + H(+). The protein is Phenylalanine--tRNA ligase beta subunit of Ehrlichia ruminantium (strain Welgevonden).